The chain runs to 65 residues: MIIWILPCRMQMSLKKEERINISKTSSSKIKEINQLRHIIRKKNRQIQILTIMLNILRCCRRMKE.

It belongs to the rhabdoviruses C protein family.

In terms of biological role, seems to stimulates transcription by the viral polymerase. May play a role in viral pathogenesis or transmission by insects vectors. This is Protein C' (P) from Vesicular stomatitis New Jersey virus (strain Missouri subtype Hazelhurst) (VSNJV).